Reading from the N-terminus, the 935-residue chain is C-1-tetrahydrofolate synthase, cytoplasmic (935 aa).

Met-1 bears the N-acetylmethionine mark. The interval 2–291 (APAEILNGRE…MLMQSTVESA (290 aa)) is methylenetetrahydrofolate dehydrogenase and methenyltetrahydrofolate cyclohydrolase (D/C) domain. Residues 52–56 (YINVK) and 99–101 (VQL) each bind substrate. The active site involves Lys-56. Residues 172-174 (GRS) and Ser-197 contribute to the NADP(+) site. Position 272-276 (272-276 (PGGVG)) interacts with substrate. Residues 310-935 (LNLKTPDPSD…PETQQVNGLF (626 aa)) are formyltetrahydrofolate synthetase domain. Position 318 is a phosphoserine (Ser-318). 380-387 (TPLGEGKS) serves as a coordination point for ATP. A phosphoserine mark is found at Ser-413 and Ser-490.

The protein in the N-terminal section; belongs to the tetrahydrofolate dehydrogenase/cyclohydrolase family. It in the C-terminal section; belongs to the formate--tetrahydrofolate ligase family. In terms of assembly, homodimer.

The protein localises to the cytoplasm. The enzyme catalyses (6R)-5,10-methylene-5,6,7,8-tetrahydrofolate + NADP(+) = (6R)-5,10-methenyltetrahydrofolate + NADPH. It carries out the reaction (6R)-5,10-methenyltetrahydrofolate + H2O = (6R)-10-formyltetrahydrofolate + H(+). It catalyses the reaction (6S)-5,6,7,8-tetrahydrofolate + formate + ATP = (6R)-10-formyltetrahydrofolate + ADP + phosphate. The protein operates within one-carbon metabolism; tetrahydrofolate interconversion. Functionally, trifunctional enzyme that catalyzes the interconversion of three forms of one-carbon-substituted tetrahydrofolate: (6R)-5,10-methylene-5,6,7,8-tetrahydrofolate, 5,10-methenyltetrahydrofolate and (6S)-10-formyltetrahydrofolate. These derivatives of tetrahydrofolate are differentially required in nucleotide and amino acid biosynthesis, (6S)-10-formyltetrahydrofolate being required for purine biosynthesis while (6R)-5,10-methylene-5,6,7,8-tetrahydrofolate is used for serine and methionine biosynthesis for instance. In Pongo abelii (Sumatran orangutan), this protein is C-1-tetrahydrofolate synthase, cytoplasmic (MTHFD1).